A 1085-amino-acid chain; its full sequence is MALYSCCWILLAFSTWCTSAYGPDQRAQKKGDIILGGLFPIHFGVAVKDQDLKSRPESVECIRYNFRGFRWLQAMIFAIEEINSSPALLPNMTLGYRIFDTCNTVSKALEATLSFVAQNKIDSLNLDEFCNCSEHIPSTIAVVGATGSGISTAVANLLGLFYIPQVSYASSSRLLSNKNQFKSFLRTIPNDEHQATAMADIIEYFRWNWVGTIAADDDYGRPGIEKFREEAEERDICIDFSELISQYSDEEKIQQVVEVIQNSTAKVIVVFSSGPDLEPLIKEIVRRNITGRIWLASEAWASSSLIAMPEYFHVVGGTIGFGLKAGQIPGFREFLQKVHPRKSVHNGFAKEFWEETFNCHLQEGAKGPLPVDTFLRGHEEGGARLSNSPTAFRPLCTGEENISSVETPYMDYTHLRISYNVYLAVYSIAHALQDIYTCIPGRGLFTNGSCADIKKVEAWQVLKHLRHLNFTSNMGEQVTFDECGDLAGNYSIINWHLSPEDGSIVFKEVGYYNVYAKKGERLFINDEKILWSGFSREVPFSNCSRDCLAGTRKGIIEGEPTCCFECVECPDGEYSDETDASACDKCPDDFWSNENHTSCIAKEIEFLSWTEPFGIALTLFAVLGIFLTAFVLGVFIKFRNTPIVKATNRELSYLLLFSLLCCFSSSLFFIGEPQDWTCRLRQPAFGISFVLCISCILVKTNRVLLVFEAKIPTSFHRKWWGLNLQFLLVFLCTFMQIVICAIWLNTAPPSSYRNHELEDEIIFITCHEGSLMALGFLIGYTCLLAAICFFFAFKSRKLPENFNEAKFITFSMLIFFIVWISFIPAYASTYGKFVSAVEVIAILAASFGLLACIFFNKVYIILFKPSRNTIEEVRCSTAAHAFKVAARATLRRSNVSRQRSSSLGGSTGSTPSSSISSKSNSEDPFPQQQPKRQKQPQPLALSPHNAQQPQPRPPSTPQPQPQSQQPPRCKQKVIFGSGTVTFSLSFDEPQKTAVAHRNSTHQTSLEAQKNNDALTKHQALLPLQCGETDSELTSQETGLQGPVGEDHQLEMEDPEEMSPALVVSNSRSFVISGGGSTVTENMLRS.

A signal peptide spans 1 to 19 (MALYSCCWILLAFSTWCTS). The Extracellular segment spans residues 20-611 (AYGPDQRAQK…KEIEFLSWTE (592 aa)). The tract at residues 23–189 (PDQRAQKKGD…QFKSFLRTIP (167 aa)) is ligand-binding 1 (LB1). Cys61 and Cys102 are joined by a disulfide. 67-71 (RGFRW) serves as a coordination point for phosphate. Positions 82, 85, 88, and 89 each coordinate Ca(2+). Asn91 is a glycosylation site (N-linked (GlcNAc...) asparagine). Thr101 lines the Ca(2+) pocket. N-linked (GlcNAc...) asparagine glycosylation occurs at Asn131. Thr146 provides a ligand contact to Ca(2+). L-tryptophan is bound by residues Ser148, Ala169, and Ser171. Residues Ser171, Pro189, Asp191, Glu232, and Asp235 each coordinate Ca(2+). A ligand-binding 2 (LB2) region spans residues 190–325 (NDEHQATAMA…GGTIGFGLKA (136 aa)). 7 cysteine pairs are disulfide-bonded: Cys237–Cys562, Cys359–Cys396, Cys438–Cys450, Cys543–Cys563, Cys547–Cys566, Cys569–Cys583, and Cys586–Cys599. Spermine is bound by residues Asp239 and Ser241. 2 N-linked (GlcNAc...) asparagine glycosylation sites follow: Asn262 and Asn288. Residue Glu298 participates in Ca(2+) binding. Glu298 serves as a coordination point for L-tryptophan. N-linked (GlcNAc...) asparagine glycosylation is present at Asn401. 416-418 (RIS) serves as a coordination point for phosphate. Asn447, Asn469, and Asn489 each carry an N-linked (GlcNAc...) asparagine glycan. Residue Tyr490 participates in Ca(2+) binding. Residue Asn542 is glycosylated (N-linked (GlcNAc...) asparagine). The segment at 543 to 613 (CSRDCLAGTR…IEFLSWTEPF (71 aa)) is cysteine-rich (CR). Position 558 (Gly558) interacts with Ca(2+). Asn595 carries an N-linked (GlcNAc...) asparagine glycan. Residues 612–637 (PFGIALTLFAVLGIFLTAFVLGVFIK) form a helical membrane-spanning segment. At 638 to 649 (FRNTPIVKATNR) the chain is on the cytoplasmic side. The segment at 638–649 (FRNTPIVKATNR) is intracellular loop 1 (ICL1). The helical transmembrane segment at 650–669 (ELSYLLLFSLLCCFSSSLFF) threads the bilayer. Residues 670-675 (IGEPQD) are Extracellular-facing. The chain crosses the membrane as a helical span at residues 676–699 (WTCRLRQPAFGISFVLCISCILVK). Residues 700-723 (TNRVLLVFEAKIPTSFHRKWWGLN) lie on the Cytoplasmic side of the membrane. Residues 700-723 (TNRVLLVFEAKIPTSFHRKWWGLN) are intracellular loop 2 (ICL2). Residues 724 to 746 (LQFLLVFLCTFMQIVICAIWLNT) traverse the membrane as a helical segment. The Extracellular segment spans residues 747–770 (APPSSYRNHELEDEIIFITCHEGS). Residues 771–790 (LMALGFLIGYTCLLAAICFF) form a helical membrane-spanning segment. Residues 791-806 (FAFKSRKLPENFNEAK) lie on the Cytoplasmic side of the membrane. The intracellular loop 3 (ICL3) stretch occupies residues 791–806 (FAFKSRKLPENFNEAK). A helical membrane pass occupies residues 807 to 829 (FITFSMLIFFIVWISFIPAYAST). Topologically, residues 830 to 833 (YGKF) are extracellular. Residues 834-855 (VSAVEVIAILAASFGLLACIFF) traverse the membrane as a helical segment. The Cytoplasmic portion of the chain corresponds to 856–1085 (NKVYIILFKP…STVTENMLRS (230 aa)). Residues 856–1085 (NKVYIILFKP…STVTENMLRS (230 aa)) are C-terminus. Positions 881–901 (AFKVAARATLRRSNVSRQRSS) are interaction with RNF19A. Phosphothreonine is present on Thr889. The segment at 891–899 (RRSNVSRQR) is arginine-rich retention motif. Ser893, Ser900, and Ser921 each carry phosphoserine. A compositionally biased stretch (low complexity) spans 893–938 (SNVSRQRSSSLGGSTGSTPSSSISSKSNSEDPFPQQQPKRQKQPQP). Disordered regions lie at residues 893–969 (SNVS…PPRC) and 1034–1058 (SQET…EEMS). Residues 950-960 (QPRPPSTPQPQ) are compositionally biased toward pro residues. Ser1068 is modified (phosphoserine).

The protein belongs to the G-protein coupled receptor 3 family. Homodimer; disulfide-linked. Interacts with VCP. Interacts with ARRB1. In terms of processing, phosphorylation at Thr-889 by PKC impairs coupling with G(q)/G(11) G-proteins, while it does not affect G(i)/G(o)-coupling. Phosphorylation at Ser-893 by PKC and Ser-900 by PKA promote plasma membrane localization. Post-translationally, ubiquitinated by RNF19A; which induces proteasomal degradation.

It is found in the cell membrane. Its activity is regulated as follows. In resting state, adopts an open conformation, anion-binding promoting the inactive configuration. Upon aromatic amino acid-binding, the groove in the extracellular venus flytrap module is closed, thereby inducing the formation of a novel homodimer interface between subunits. Calcium ions stabilize the active state by enhancing homodimer interactions between membrane-proximal domains to fully activate the receptor. Upon activation, the homodimer adopts an asymmetric configuration of the 7-transmembrane region that primes one protomer for G-protein coupling. G-protein binding expands the transmembrane dimer interface; the restriction imposed by the receptor dimer, in combination with intracellular loop 2 (ICL2), enables G-protein activation by facilitating conformational transition of G-protein alpha. Coupling to different classes of G-proteins results in distinct CASR-G-protein interfaces. Its function is as follows. G-protein-coupled receptor that senses changes in the extracellular concentration of calcium ions and plays a key role in maintaining calcium homeostasis. Senses fluctuations in the circulating calcium concentration: activated by elevated circulating calcium, leading to decreased parathyroid hormone (PTH) secretion in parathyroid glands. In kidneys, acts as a key regulator of renal tubular calcium resorption. Ligand binding causes a conformation change that triggers signaling via guanine nucleotide-binding proteins (G-proteins) and modulates the activity of downstream effectors. CASR is coupled with different G(q)/G(11), G(i)/G(o)- or G(s)-classes of G-proteins depending on the context. In the parathyroid and kidney, CASR signals through G(q)/G(11) and G(i)/G(o) G-proteins: G(q)/G(11) coupling activates phospholipase C-beta, releasing diacylglycerol (DAG) and inositol 1,4,5-trisphosphate (IP3) second messengers, while G(i)/G(o) coupling mediates inhibition of adenylate cyclase activity. The G-protein-coupled receptor activity is activated by a co-agonist mechanism: aromatic amino acids, such as Trp or Phe, act concertedly with divalent cations, such as calcium or magnesium, to achieve full receptor activation. Acts as an activator of the NLRP3 inflammasome via G(i)/G(o)-mediated signaling: down-regulation of cyclic AMP (cAMP) relieving NLRP3 inhibition by cAMP. Acts as a regulator of proton-sensing receptor GPR68 in a seesaw manner: CASR-mediated signaling inhibits GPR68 signaling in response to extracellular calcium, while GPR68 inhibits CASR in presence of extracellular protons. The protein is Extracellular calcium-sensing receptor (CASR) of Bos taurus (Bovine).